We begin with the raw amino-acid sequence, 301 residues long: Ankyrin repeat domain-containing protein 29 (301 aa).

8 ANK repeats span residues 11 to 41 (PLAN…DVDC), 45 to 74 (HGTT…DINL), 78 to 107 (SGTT…STEF), 111 to 140 (DGGT…NIHD), 144 to 173 (DGAT…KVNQ), 177 to 206 (DGTA…DRDA), 210 to 239 (DGTT…TLGI), and 242 to 271 (NGTS…DPSL).

The polypeptide is Ankyrin repeat domain-containing protein 29 (ANKRD29) (Homo sapiens (Human)).